The chain runs to 65 residues: Mating-type pheromone BBP1(2) (65 aa).

Cysteine 62 carries the cysteine methyl ester modification. Cysteine 62 carries S-farnesyl cysteine lipidation. A propeptide spans valine 63 to alanine 65 (removed in mature form).

The protein resides in the cell membrane. In terms of biological role, activates B-regulated development. The protein is Mating-type pheromone BBP1(2) (BBP1(2)) of Schizophyllum commune (Split gill fungus).